The primary structure comprises 154 residues: Ascorbate-specific PTS system EIIA component (154 aa).

The region spanning 6 to 150 (SLAENNSIRL…QEVLDLIDRT (145 aa)) is the PTS EIIA type-2 domain. Catalysis depends on histidine 68, which acts as the Tele-phosphohistidine intermediate. Histidine 68 is subject to Phosphohistidine.

It localises to the cytoplasm. The phosphoenolpyruvate-dependent sugar phosphotransferase system (sugar PTS), a major carbohydrate active transport system, catalyzes the phosphorylation of incoming sugar substrates concomitantly with their translocation across the cell membrane. The enzyme II UlaABC PTS system is involved in ascorbate transport. The polypeptide is Ascorbate-specific PTS system EIIA component (ulaC) (Salmonella typhi).